Consider the following 199-residue polypeptide: Peroxiredoxin-2 (199 aa).

In terms of domain architecture, Thioredoxin spans 7–165 (AHVGKPAPEF…ALRLVQAFQY (159 aa)). Residue cysteine 52 is the Cysteine sulfenic acid (-SOH) intermediate of the active site. The residue at position 113 (serine 113) is a Phosphoserine. At threonine 183 the chain carries Phosphothreonine. Residue lysine 197 is modified to N6-acetyllysine.

The protein belongs to the peroxiredoxin family. AhpC/Prx1 subfamily. As to quaternary structure, homodimer; disulfide-linked, upon oxidation. 5 homodimers assemble to form a ring-like decamer. Interacts with TIPIN. Post-translationally, the enzyme can be inactivated by further oxidation of the cysteine sulfenic acid (C(P)-SOH) to sulphinic acid (C(P)-SO2H) instead of its condensation to a disulfide bond. It can be reactivated by forming a transient disulfide bond with sulfiredoxin SRXN1, which reduces the cysteine sulfinic acid in an ATP- and Mg-dependent manner. In terms of processing, acetylation increases resistance to transition to high molecular-mass complexes. Deacetylated by HDAC6 which decreases reducing activity.

The protein localises to the cytoplasm. It carries out the reaction a hydroperoxide + [thioredoxin]-dithiol = an alcohol + [thioredoxin]-disulfide + H2O. Thiol-specific peroxidase that catalyzes the reduction of hydrogen peroxide and organic hydroperoxides to water and alcohols, respectively. Plays a role in cell protection against oxidative stress by detoxifying peroxides and as sensor of hydrogen peroxide-mediated signaling events. Might participate in the signaling cascades of growth factors and tumor necrosis factor-alpha by regulating the intracellular concentrations of H(2)O(2). In Bos taurus (Bovine), this protein is Peroxiredoxin-2 (PRDX2).